Here is a 326-residue protein sequence, read N- to C-terminus: Trans-L-3-hydroxyproline dehydratase (326 aa).

Cysteine 80 functions as the Proton acceptor in the catalytic mechanism. Substrate is bound by residues glycine 81–histidine 82, aspartate 241, and glycine 246–serine 247.

Belongs to the proline racemase family. In terms of assembly, homodimer.

It catalyses the reaction trans-3-hydroxy-L-proline = 1-pyrroline-2-carboxylate + H2O. In terms of biological role, catalyzes the dehydration of trans-3-hydroxy-L-proline to delta-1-pyrroline-2-carboxylate (Pyr2C). The protein is Trans-L-3-hydroxyproline dehydratase (l3hypdh) of Saccoglossus kowalevskii (Acorn worm).